The primary structure comprises 130 residues: Small ribosomal subunit protein uS8 (130 aa).

The protein belongs to the universal ribosomal protein uS8 family. In terms of assembly, part of the 30S ribosomal subunit.

Functionally, one of the primary rRNA binding proteins, it binds directly to 16S rRNA central domain where it helps coordinate assembly of the platform of the 30S subunit. The protein is Small ribosomal subunit protein uS8 of Haloarcula marismortui (strain ATCC 43049 / DSM 3752 / JCM 8966 / VKM B-1809) (Halobacterium marismortui).